The primary structure comprises 196 residues: MPIGVPKVPFRSPGEEDASWVDVYNRLYRERLLFLGQEVDSEISNQLIGLMVYLSIEDDTKDLYLFINSPGGWVIPGVAIYDTMQFVRPDVHTICMGLAASMGSFILVGGEITKRLAFPHARVMIHQPASSFYEAQTGEFLLEAEELLKLRETLTKVYGQRTGKPLWVVSEDMERDVFMSATEAQAHGIIDLVAVE.

The active-site Nucleophile is the S101. H126 is an active-site residue.

The protein belongs to the peptidase S14 family. Component of the chloroplastic Clp protease core complex.

Its subcellular location is the plastid. The protein localises to the chloroplast stroma. The catalysed reaction is Hydrolysis of proteins to small peptides in the presence of ATP and magnesium. alpha-casein is the usual test substrate. In the absence of ATP, only oligopeptides shorter than five residues are hydrolyzed (such as succinyl-Leu-Tyr-|-NHMec, and Leu-Tyr-Leu-|-Tyr-Trp, in which cleavage of the -Tyr-|-Leu- and -Tyr-|-Trp bonds also occurs).. Functionally, cleaves peptides in various proteins in a process that requires ATP hydrolysis. Has a chymotrypsin-like activity. Plays a major role in the degradation of misfolded proteins. This is ATP-dependent Clp protease proteolytic subunit from Spinacia oleracea (Spinach).